The sequence spans 602 residues: Bifunctional ribose 1,5-bisphosphokinase-thymidine phosphorylase (602 aa).

Positions 1 to 187 (MKESGTFFLV…ALRNGANAGS (187 aa)) are ribose 1,5-bisphosphokinase. Residues 188–602 (VPQPASRRHL…ASTAVRVDPD (415 aa)) are thymidinephosphorylase.

In the N-terminal section; belongs to the ribose 1,5-bisphosphokinase family. The protein in the C-terminal section; belongs to the thymidine/pyrimidine-nucleoside phosphorylase family. Type 2 subfamily.

The enzyme catalyses alpha-D-ribose 1,5-bisphosphate + ATP = 5-phospho-alpha-D-ribose 1-diphosphate + ADP. It catalyses the reaction thymidine + phosphate = 2-deoxy-alpha-D-ribose 1-phosphate + thymine. Its pathway is metabolic intermediate biosynthesis; 5-phospho-alpha-D-ribose 1-diphosphate biosynthesis; 5-phospho-alpha-D-ribose 1-diphosphate from D-ribose 5-phosphate (route II): step 3/3. Its function is as follows. Catalyzes the phosphorylation of ribose 1,5-bisphosphate to 5-phospho-D-ribosyl alpha-1-diphosphate (PRPP). The sequence is that of Bifunctional ribose 1,5-bisphosphokinase-thymidine phosphorylase (phnN) from Cupriavidus pinatubonensis (strain JMP 134 / LMG 1197) (Cupriavidus necator (strain JMP 134)).